The following is a 180-amino-acid chain: Large ribosomal subunit protein uL10 (180 aa).

Residues 161-180 (SKAEGSEETESNETTETVEE) are disordered. The segment covering 166 to 180 (SEETESNETTETVEE) has biased composition (acidic residues).

It belongs to the universal ribosomal protein uL10 family. Part of the ribosomal stalk of the 50S ribosomal subunit. The N-terminus interacts with L11 and the large rRNA to form the base of the stalk. The C-terminus forms an elongated spine to which L12 dimers bind in a sequential fashion forming a multimeric L10(L12)X complex.

Forms part of the ribosomal stalk, playing a central role in the interaction of the ribosome with GTP-bound translation factors. This is Large ribosomal subunit protein uL10 from Finegoldia magna (strain ATCC 29328 / DSM 20472 / WAL 2508) (Peptostreptococcus magnus).